The sequence spans 429 residues: Histidine--tRNA ligase (429 aa).

Belongs to the class-II aminoacyl-tRNA synthetase family. In terms of assembly, homodimer.

It is found in the cytoplasm. The catalysed reaction is tRNA(His) + L-histidine + ATP = L-histidyl-tRNA(His) + AMP + diphosphate + H(+). In Pseudomonas putida (strain W619), this protein is Histidine--tRNA ligase.